The chain runs to 687 residues: Probable intron-encoded endonuclease aI3 (687 aa).

The tract at residues 1–374 (MKQMSYVTRW…NASMDVAFHD (374 aa)) is COX1 exons 1 to 3 encoded. 10 helical membrane-spanning segments follow: residues 19–39 (IGMT…GMSV), 69–89 (LLMM…NFFL), 103–123 (LNNI…CSVL), 152–172 (AMFA…NFMV), 188–208 (PLFA…LPVL), 240–260 (LFWF…FGVM), 273–293 (FGEM…FLVW), 315–335 (MVIA…IYGG), 341–361 (VPML…LTGV), and 376–396 (IFIY…NNYT). The segment at 375–687 (RIFIYYVSFF…KKESLMKFLK (313 aa)) is COX1 intron 3 encoded.

This sequence in the C-terminal section; belongs to the LAGLIDADG endonuclease family. It in the N-terminal section; belongs to the heme-copper respiratory oxidase family. The mature protein may arise from proteolytic cleavage of an in-frame translation of COX1 exons 1 to 3 plus intron 3, containing the aI3 open reading frame.

The protein resides in the mitochondrion. The protein localises to the membrane. In terms of biological role, mitochondrial DNA endonuclease involved in intron homing. The polypeptide is Probable intron-encoded endonuclease aI3 (aI3) (Debaryomyces hansenii (strain ATCC 36239 / CBS 767 / BCRC 21394 / JCM 1990 / NBRC 0083 / IGC 2968) (Yeast)).